Here is a 238-residue protein sequence, read N- to C-terminus: uncharacterized protein (238 aa).

This is an uncharacterized protein from Acidianus filamentous virus 2 (isolate Italy/Pozzuoli) (AFV-2).